A 407-amino-acid chain; its full sequence is Tryptophan synthase beta chain (407 aa).

Lysine 86 is modified (N6-(pyridoxal phosphate)lysine).

It belongs to the TrpB family. As to quaternary structure, tetramer of two alpha and two beta chains. The cofactor is pyridoxal 5'-phosphate.

The catalysed reaction is (1S,2R)-1-C-(indol-3-yl)glycerol 3-phosphate + L-serine = D-glyceraldehyde 3-phosphate + L-tryptophan + H2O. Its pathway is amino-acid biosynthesis; L-tryptophan biosynthesis; L-tryptophan from chorismate: step 5/5. The beta subunit is responsible for the synthesis of L-tryptophan from indole and L-serine. This Shewanella woodyi (strain ATCC 51908 / MS32) protein is Tryptophan synthase beta chain.